We begin with the raw amino-acid sequence, 449 residues long: Phosphoglucosamine mutase (449 aa).

The Phosphoserine intermediate role is filled by S101. S101, D242, D244, and D246 together coordinate Mg(2+). S101 bears the Phosphoserine mark.

The protein belongs to the phosphohexose mutase family. The cofactor is Mg(2+). In terms of processing, activated by phosphorylation.

The enzyme catalyses alpha-D-glucosamine 1-phosphate = D-glucosamine 6-phosphate. Functionally, catalyzes the conversion of glucosamine-6-phosphate to glucosamine-1-phosphate. The polypeptide is Phosphoglucosamine mutase (Bradyrhizobium sp. (strain BTAi1 / ATCC BAA-1182)).